We begin with the raw amino-acid sequence, 542 residues long: ABC transport system permease protein p69 (542 aa).

12 helical membrane-spanning segments follow: residues A23–F43, I77–L97, F114–F134, A140–F160, L212–V232, L236–F256, V287–L307, T350–A370, L386–F406, I412–F432, L481–E501, and G509–V529. The ABC transmembrane type-1 domain maps to T349–L526.

This sequence belongs to the binding-protein-dependent transport system permease family.

It localises to the cell membrane. In terms of biological role, probably part of a high-affinity transport system. The sequence is that of ABC transport system permease protein p69 (p69) from Mycoplasma pneumoniae (strain ATCC 29342 / M129 / Subtype 1) (Mycoplasmoides pneumoniae).